The following is an 81-amino-acid chain: Putative membrane protein insertion efficiency factor (81 aa).

This sequence belongs to the UPF0161 family.

The protein localises to the cell inner membrane. Functionally, could be involved in insertion of integral membrane proteins into the membrane. This Pseudomonas syringae pv. tomato (strain ATCC BAA-871 / DC3000) protein is Putative membrane protein insertion efficiency factor.